Reading from the N-terminus, the 459-residue chain is MLKLYNSLTRQKEEFKPLQPGKVGMYVCGITIYDLCHIGHGRTFVSFDMIVRYLRYSGYDVNFLRNITDVDDKIIKRANENKESCESLTERLIGEMHRDFDALNMKRPDFEPRATLHIPEIIDMVEKLIEKEHAYVSGNGDVLFSVSSFPEYGRLSGQNLDQLQAGARVEVEDTKRDPMDFVLWKMSKPGEPTWESPWGPGRPGWHIECSAMNSKHLGQHFDIHGGGSDLQFPHHENEIAQSCCAHNTPYVNYWMHTGMVMVDKEKMSKSLNNFFTIRDVLEHYDAATVRYFLLSGHYRSQLNYSEDNLKQAKSALERLYTSLKGLDLSVEAASADEYVAKFKVAMDDDFNTPEAYSVLFEMVREINRLKEADNAKASSLGVKLKELADVLGILDQDVDTFFKGEGSTDEVAEIEALIAERNRARAEKDWPAADVARDGLNALGVILEDGPEGTTWRKK.

Residue cysteine 28 coordinates Zn(2+). The 'HIGH' region motif lies at 30–40; that stretch reads ITIYDLCHIGH. 3 residues coordinate Zn(2+): cysteine 209, histidine 234, and glutamate 238. Residues 266–270 carry the 'KMSKS' region motif; that stretch reads KMSKS. Lysine 269 contacts ATP.

This sequence belongs to the class-I aminoacyl-tRNA synthetase family. In terms of assembly, monomer. Requires Zn(2+) as cofactor.

It localises to the cytoplasm. It catalyses the reaction tRNA(Cys) + L-cysteine + ATP = L-cysteinyl-tRNA(Cys) + AMP + diphosphate. The chain is Cysteine--tRNA ligase from Shewanella sediminis (strain HAW-EB3).